The sequence spans 38 residues: Natriuretic peptide DNP (38 aa).

A disulfide bridge links Cys-7 with Cys-23. A disordered region spans residues 19–38 (SNLGCPSLRDPRPNAPSTSA).

It belongs to the natriuretic peptide family. In terms of tissue distribution, expressed by the venom gland.

The protein resides in the secreted. Its function is as follows. Exhibits vasodilator, natriuretic and diuretic properties in animal models and human tissues. Acts by stimulating cGMP via the natriuretic peptide receptor 1 (NPR1). Is a poor agonist of the atrial natriuretic peptide receptor 2 (NPR2). Is not degraded by neutral endopeptidase (NEP/MME). Binds to atrial natriuretic peptide clearance receptor (NPR-C/NPR3), which may be responsible of the removal of DNP from the circulation. Increases calcium uptake and induces histamine release from rat peritoneal mast cells. Increases calcium-activated potassium (KCa) current in gastric antral circular smooth muscle cells by increasing cGMP production and activating inositol trisphosphate receptors (IP3Rs). In vivo, reduces both systolic and diastolic blood pressure with no effect on heart rate, when intravenously injected in conscious rabbits. This Dendroaspis angusticeps (Eastern green mamba) protein is Natriuretic peptide DNP.